A 411-amino-acid chain; its full sequence is Imidazolonepropionase (411 aa).

Fe(3+)-binding residues include His78 and His80. 2 residues coordinate Zn(2+): His78 and His80. 4-imidazolone-5-propanoate is bound by residues Arg87, Tyr150, and His183. Tyr150 serves as a coordination point for N-formimidoyl-L-glutamate. His248 serves as a coordination point for Fe(3+). His248 is a binding site for Zn(2+). Gln251 provides a ligand contact to 4-imidazolone-5-propanoate. Asp322 serves as a coordination point for Fe(3+). Position 322 (Asp322) interacts with Zn(2+). The N-formimidoyl-L-glutamate site is built by Asn324 and Gly326. Ser327 is a 4-imidazolone-5-propanoate binding site.

Belongs to the metallo-dependent hydrolases superfamily. HutI family. It depends on Zn(2+) as a cofactor. Fe(3+) serves as cofactor.

The protein localises to the cytoplasm. The enzyme catalyses 4-imidazolone-5-propanoate + H2O = N-formimidoyl-L-glutamate. It participates in amino-acid degradation; L-histidine degradation into L-glutamate; N-formimidoyl-L-glutamate from L-histidine: step 3/3. Functionally, catalyzes the hydrolytic cleavage of the carbon-nitrogen bond in imidazolone-5-propanoate to yield N-formimidoyl-L-glutamate. It is the third step in the universal histidine degradation pathway. This chain is Imidazolonepropionase, found in Flavobacterium johnsoniae (strain ATCC 17061 / DSM 2064 / JCM 8514 / BCRC 14874 / CCUG 350202 / NBRC 14942 / NCIMB 11054 / UW101) (Cytophaga johnsonae).